Here is a 451-residue protein sequence, read N- to C-terminus: Signal transduction histidine-protein kinase ArlS (451 aa).

Helical transmembrane passes span 11 to 31 and 156 to 176; these read IIVT…IIIF and IIAL…SYVF. The HAMP domain occupies 178 to 231; the sequence is TQITKPLVSLSNKMIEIRRDGFQNKLQLNTNYEEIDNLANTFNEMMSQIEESFN. The Histidine kinase domain maps to 239 to 451; sequence DASHELRTPL…NKGTTFKIIF (213 aa). H242 carries the post-translational modification Phosphohistidine; by autocatalysis.

In terms of processing, autophosphorylated.

Its subcellular location is the cell membrane. The enzyme catalyses ATP + protein L-histidine = ADP + protein N-phospho-L-histidine.. Functionally, member of the two-component regulatory system ArlS/ArlR involved in the regulation of adhesion, autolysis, multidrug resistance and virulence. ArlS probably functions as a sensor protein kinase which is autophosphorylated at a histidine residue and transfers its phosphate group to ArlR. The protein is Signal transduction histidine-protein kinase ArlS (arlS) of Staphylococcus aureus (strain bovine RF122 / ET3-1).